The primary structure comprises 406 residues: Imidazolonepropionase (406 aa).

Residues histidine 75 and histidine 77 each coordinate Fe(3+). Histidine 75 and histidine 77 together coordinate Zn(2+). Residues arginine 84, tyrosine 147, and histidine 180 each contribute to the 4-imidazolone-5-propanoate site. Tyrosine 147 contributes to the N-formimidoyl-L-glutamate binding site. Histidine 245 contributes to the Fe(3+) binding site. Residue histidine 245 coordinates Zn(2+). Glutamine 248 contributes to the 4-imidazolone-5-propanoate binding site. Position 320 (aspartate 320) interacts with Fe(3+). Aspartate 320 contributes to the Zn(2+) binding site. Positions 322 and 324 each coordinate N-formimidoyl-L-glutamate. 4-imidazolone-5-propanoate is bound at residue threonine 325.

This sequence belongs to the metallo-dependent hydrolases superfamily. HutI family. Zn(2+) serves as cofactor. The cofactor is Fe(3+).

Its subcellular location is the cytoplasm. It carries out the reaction 4-imidazolone-5-propanoate + H2O = N-formimidoyl-L-glutamate. Its pathway is amino-acid degradation; L-histidine degradation into L-glutamate; N-formimidoyl-L-glutamate from L-histidine: step 3/3. Functionally, catalyzes the hydrolytic cleavage of the carbon-nitrogen bond in imidazolone-5-propanoate to yield N-formimidoyl-L-glutamate. It is the third step in the universal histidine degradation pathway. The protein is Imidazolonepropionase of Hyphomonas neptunium (strain ATCC 15444).